Reading from the N-terminus, the 432-residue chain is Glutamate-1-semialdehyde 2,1-aminomutase 1 (432 aa).

At Lys272 the chain carries N6-(pyridoxal phosphate)lysine.

It belongs to the class-III pyridoxal-phosphate-dependent aminotransferase family. HemL subfamily. Homodimer. Pyridoxal 5'-phosphate is required as a cofactor.

It is found in the cytoplasm. It carries out the reaction (S)-4-amino-5-oxopentanoate = 5-aminolevulinate. The protein operates within porphyrin-containing compound metabolism; protoporphyrin-IX biosynthesis; 5-aminolevulinate from L-glutamyl-tRNA(Glu): step 2/2. The polypeptide is Glutamate-1-semialdehyde 2,1-aminomutase 1 (Exiguobacterium sp. (strain ATCC BAA-1283 / AT1b)).